The chain runs to 149 residues: Endoribonuclease YbeY (149 aa).

Zn(2+) contacts are provided by His-113, His-117, and His-123.

It belongs to the endoribonuclease YbeY family. The cofactor is Zn(2+).

The protein localises to the cytoplasm. Functionally, single strand-specific metallo-endoribonuclease involved in late-stage 70S ribosome quality control and in maturation of the 3' terminus of the 16S rRNA. This Saccharophagus degradans (strain 2-40 / ATCC 43961 / DSM 17024) protein is Endoribonuclease YbeY.